An 830-amino-acid chain; its full sequence is Receptor-like protein kinase HERK 1 (830 aa).

The signal sequence occupies residues Met-1–Gly-24. Residues Phe-25–Gly-405 are Extracellular-facing. N-linked (GlcNAc...) asparagine glycosylation is found at Asn-40, Asn-146, Asn-217, Asn-280, and Asn-381. Residues Leu-406–Val-426 traverse the membrane as a helical segment. Residues Leu-427–Arg-830 lie on the Cytoplasmic side of the membrane. A Protein kinase domain is found at Phe-485 to Ala-758. ATP is bound by residues Ile-491–Val-499 and Lys-513. Asp-609 functions as the Proton acceptor in the catalytic mechanism.

The protein belongs to the protein kinase superfamily. Ser/Thr protein kinase family. In terms of processing, autophosphorylated. In terms of tissue distribution, expressed in most vegetative tissues, including leaves, stems and roots, especially in cell elongation regions.

The protein localises to the cell membrane. Functionally, receptor-like protein kinase required for cell elongation during vegetative growth, mostly in a brassinosteroid-(BR-) independent manner. This Arabidopsis thaliana (Mouse-ear cress) protein is Receptor-like protein kinase HERK 1 (HERK1).